The chain runs to 183 residues: Capsid protein (183 aa).

Residues Asn136–Cys183 form a disordered region. The span at Val149–Ser176 shows a compositional bias: basic residues. Residues Ser155, Ser162, and Ser170 each carry the phosphoserine; by host modification. Residues Ser155–Pro161 form a 1; half-length repeat. The 3 X 8 AA repeats of S-P-R-R-R-[PR]-S-Q stretch occupies residues Ser155–Gln177. Positions Arg158–Arg175 match the Bipartite nuclear localization signal motif. 2 repeat units span residues Ser162–Gln169 and Ser170–Gln177. The interval Gln177 to Cys183 is RNA binding.

The protein belongs to the orthohepadnavirus core antigen family. In terms of assembly, homodimerizes, then multimerizes. Interacts with cytosol exposed regions of viral L glycoprotein present in the reticulum-to-Golgi compartment. Interacts with human FLNB. Phosphorylated form interacts with host importin alpha; this interaction depends on the exposure of the NLS, which itself depends upon genome maturation and/or phosphorylation of the capsid protein. Interacts with host NUP153. Phosphorylated by host SRPK1, SRPK2, and maybe protein kinase C or GAPDH. Phosphorylation is critical for pregenomic RNA packaging. Protein kinase C phosphorylation is stimulated by HBx protein and may play a role in transport of the viral genome to the nucleus at the late step during the viral replication cycle.

Its subcellular location is the virion. The protein resides in the host cytoplasm. Self assembles to form an icosahedral capsid. Most capsids appear to be large particles with an icosahedral symmetry of T=4 and consist of 240 copies of capsid protein, though a fraction forms smaller T=3 particles consisting of 180 capsid proteins. Entering capsids are transported along microtubules to the nucleus. Phosphorylation of the capsid is thought to induce exposure of nuclear localization signal in the C-terminal portion of the capsid protein that allows binding to the nuclear pore complex via the importin (karyopherin-) alpha and beta. Capsids are imported in intact form through the nuclear pore into the nuclear basket, where it probably binds NUP153. Only capsids that contain the mature viral genome can release the viral DNA and capsid protein into the nucleoplasm. Immature capsids get stuck in the basket. Capsids encapsulate the pre-genomic RNA and the P protein. Pre-genomic RNA is reverse-transcribed into DNA while the capsid is still in the cytoplasm. The capsid can then either be directed to the nucleus, providing more genomes for transcription, or bud through the endoplasmic reticulum to provide new virions. This chain is Capsid protein, found in Hylobatidae (gibbons).